A 311-amino-acid chain; its full sequence is Ciliary microtubule inner protein 2B (311 aa).

Disordered stretches follow at residues 64–93 (PFPP…LGDP) and 150–183 (QEGR…APFM).

It belongs to the CIMIP2 family. In terms of tissue distribution, expressed in airway epithelial cells.

It localises to the cytoplasm. It is found in the cytoskeleton. Its subcellular location is the cilium axoneme. In terms of biological role, microtubule inner protein (MIP) part of the dynein-decorated doublet microtubules (DMTs) in cilia axoneme, which is required for motile cilia beating. The polypeptide is Ciliary microtubule inner protein 2B (cimip2b) (Xenopus laevis (African clawed frog)).